A 339-amino-acid chain; its full sequence is Lipopolysaccharide glucosyltransferase WaaO (339 aa).

Residues 34–39 (GTDKNF) and 131–132 (DA) contribute to the UDP site. Residues Asp-131 and Asp-133 each contribute to the Mg(2+) site. 2 consecutive short sequence motifs (DXD) follow at residues 131–133 (DAD) and 220–222 (DQD). A Mg(2+)-binding site is contributed by His-265. A UDP-binding site is contributed by 265–271 (HYIGPTK).

This sequence belongs to the glycosyltransferase 8 family. Mg(2+) is required as a cofactor.

The catalysed reaction is UDP-glucose + lipopolysaccharide = UDP + alpha-D-glucosyl-lipopolysaccharide.. It carries out the reaction alpha-D-Gal-(1-&gt;6)-alpha-D-Glc-(1-&gt;3)-[L-alpha-D-Hep-(1-&gt;7)]-4-O-PO3(2-)-L-alpha-D-Hep-(1-&gt;3)-4-O-PO3(2-)-L-alpha-D-Hep-(1-&gt;5)-[alpha-Kdo-(2-&gt;4)]-alpha-Kdo-(2-&gt;6)-lipid A + UDP-alpha-D-glucose = alpha-D-Glc-(1-&gt;3)-[alpha-D-Gal-(1-&gt;6)]-alpha-D-Glc-(1-&gt;3)-[L-alpha-D-Hep-(1-&gt;7)]-4-O-PO3(2-)-L-alpha-D-Hep-(1-&gt;3)-4-O-PO3(2-)-L-alpha-D-Hep-(1-&gt;5)-[alpha-Kdo-(2-&gt;4)]-alpha-Kdo-(2-&gt;6)-lipid A + UDP + H(+). It functions in the pathway bacterial outer membrane biogenesis; LPS core biosynthesis. Glucosyltransferase involved in the biosynthesis of the core oligosaccharide region of lipopolysaccharide (LPS). Catalyzes the addition of a second glucose (glucose II) to the first outer-core glucose (glucose I). In vitro, can add multiple glucose residues to its lipid acceptor. Activity does not require the branched galactose added by WaaB, but it is higher in the presence of this branched galactose. In the absence of a lipid acceptor, can hydrolyze UDP-glucose, but not UDP-galactose. This is Lipopolysaccharide glucosyltransferase WaaO from Escherichia coli (strain K12).